The sequence spans 440 residues: Transposon Ty1-NL2 Gag polyprotein (440 aa).

Polar residues-rich tracts occupy residues 1–23 (MESQ…SVTS), 48–60 (TKAN…TPAS), 71–97 (SPQT…NQAN), and 129–152 (QFPQ…GNTF). 3 disordered regions span residues 1-97 (MESQ…NQAN), 129-171 (QFPQ…YVRP), and 352-440 (GSRN…PETY). The span at 153 to 165 (TDSSSADSDMTST) shows a compositional bias: low complexity. The tract at residues 299–401 (NNGIHINNKV…NSKSKTARAH (103 aa)) is RNA-binding. Residues 402–418 (NVSTSNNSPSTDNDSIS) show a composition bias toward low complexity. Ser416 carries the post-translational modification Phosphoserine. Over residues 419-428 (KSTTEPIQLN) the composition is skewed to polar residues. Residues 429–440 (NKHDLHLRPETY) show a composition bias toward basic and acidic residues.

In terms of assembly, homotrimer.

It is found in the cytoplasm. Its function is as follows. Capsid protein (CA) is the structural component of the virus-like particle (VLP), forming the shell that encapsulates the retrotransposons dimeric RNA genome. The particles are assembled from trimer-clustered units and there are holes in the capsid shells that allow for the diffusion of macromolecules. CA also has nucleocapsid-like chaperone activity, promoting primer tRNA(i)-Met annealing to the multipartite primer-binding site (PBS), dimerization of Ty1 RNA and initiation of reverse transcription. The chain is Transposon Ty1-NL2 Gag polyprotein (TY1A-NL2) from Saccharomyces cerevisiae (strain ATCC 204508 / S288c) (Baker's yeast).